We begin with the raw amino-acid sequence, 396 residues long: Ornithine aminotransferase (396 aa).

An N6-(pyridoxal phosphate)lysine modification is found at Lys255.

It belongs to the class-III pyridoxal-phosphate-dependent aminotransferase family. OAT subfamily. The cofactor is pyridoxal 5'-phosphate.

The protein resides in the cytoplasm. It carries out the reaction a 2-oxocarboxylate + L-ornithine = L-glutamate 5-semialdehyde + an L-alpha-amino acid. It participates in amino-acid biosynthesis; L-proline biosynthesis; L-glutamate 5-semialdehyde from L-ornithine: step 1/1. Functionally, catalyzes the interconversion of ornithine to glutamate semialdehyde. This is Ornithine aminotransferase from Bacillus cereus (strain Q1).